We begin with the raw amino-acid sequence, 444 residues long: Methylenetetrahydrofolate--tRNA-(uracil-5-)-methyltransferase TrmFO (444 aa).

Residue Gly9–Gly14 participates in FAD binding.

The protein belongs to the MnmG family. TrmFO subfamily. FAD is required as a cofactor.

Its subcellular location is the cytoplasm. It carries out the reaction uridine(54) in tRNA + (6R)-5,10-methylene-5,6,7,8-tetrahydrofolate + NADH + H(+) = 5-methyluridine(54) in tRNA + (6S)-5,6,7,8-tetrahydrofolate + NAD(+). The catalysed reaction is uridine(54) in tRNA + (6R)-5,10-methylene-5,6,7,8-tetrahydrofolate + NADPH + H(+) = 5-methyluridine(54) in tRNA + (6S)-5,6,7,8-tetrahydrofolate + NADP(+). Functionally, catalyzes the folate-dependent formation of 5-methyl-uridine at position 54 (M-5-U54) in all tRNAs. This is Methylenetetrahydrofolate--tRNA-(uracil-5-)-methyltransferase TrmFO from Cereibacter sphaeroides (strain ATCC 17029 / ATH 2.4.9) (Rhodobacter sphaeroides).